Reading from the N-terminus, the 442-residue chain is Putative neutral sphingomyelinase (442 aa).

A Mg(2+)-binding site is contributed by E46. H264 serves as the catalytic Proton acceptor. Residues 309-330 (ALTGEDDQSSQHQPEIQCNGSS) form a disordered region. Residues 318 to 330 (SQHQPEIQCNGSS) show a composition bias toward polar residues. Helical transmembrane passes span 362-384 (RILY…EFTA) and 391-413 (IFLL…ASIW).

Belongs to the neutral sphingomyelinase family.

The protein resides in the membrane. It catalyses the reaction a sphingomyelin + H2O = phosphocholine + an N-acylsphing-4-enine + H(+). The protein operates within lipid metabolism; sphingolipid metabolism. The protein is Putative neutral sphingomyelinase of Drosophila melanogaster (Fruit fly).